Reading from the N-terminus, the 158-residue chain is Transcriptional regulatory protein DoeX (158 aa).

Residues 3-64 (LDRYDLKILE…RLNTDVLVKR (62 aa)) form the HTH asnC-type domain. Residues 22 to 41 (KSKLAEAINLSVSPCWERVR) constitute a DNA-binding region (H-T-H motif).

The protein localises to the cytoplasm. In terms of biological role, acts as a transcriptional regulator. It binds DNA specifically to a fragment from the doeA promoter region. The sequence is that of Transcriptional regulatory protein DoeX (doeX) from Halomonas elongata (strain ATCC 33173 / DSM 2581 / NBRC 15536 / NCIMB 2198 / 1H9).